Consider the following 239-residue polypeptide: DnaA regulatory inactivator Hda (239 aa).

This sequence belongs to the DnaA family. HdA subfamily. In terms of assembly, the active form seems to be an ADP-bound monomer. Forms the RIDA complex (regulatory inactivation of DnaA) of ATP-DnaA, ADP-Hda and the DNA-loaded beta sliding clamp (dnaN).

In terms of biological role, mediates the interaction of DNA replication initiator protein DnaA with DNA polymerase subunit beta sliding clamp (dnaN). Stimulates hydrolysis of ATP-DnaA to ADP-DnaA, rendering DnaA inactive for reinitiation, a process called regulatory inhibition of DnaA or RIDA. This chain is DnaA regulatory inactivator Hda, found in Yersinia pseudotuberculosis serotype O:1b (strain IP 31758).